A 558-amino-acid chain; its full sequence is Two-component response regulator-like APRR5 (558 aa).

The Response regulatory domain occupies 51–169 (RVLLVEADDS…ELRNLWQHVW (119 aa)). Residues 180-233 (FPWNESVGQQKAEGASANNSNGKRDDHVVSGNGGDAQSSCTRPEMEGESADVEV) form a disordered region. The stretch at 240-260 (QMECAKSQFNETRLLANELQS) forms a coiled coil. 2 disordered regions span residues 297-319 (SLRR…HPSS) and 535-558 (KKLA…TQAP). Residues 303–319 (ASENQSSGDRPSLHPSS) are compositionally biased toward polar residues. Positions 509-551 (REAALTKFRMKRKDRCYEKKVRYESRKKLAEQRPRIKGQFVRQ) constitute a CCT domain.

Belongs to the ARR-like family. As to quaternary structure, interacts with ADO1 and ADO2. Interacts with SPY (via N-terminus). Post-translationally, phosphorylation varies throughout the diurnal cycle and enhances ADO1 binding. In terms of processing, O-fucosylated by SPY. O-fucosylation promotes APRR5 proteolysis.

The protein resides in the nucleus. In terms of biological role, transcriptional repressor of CCA1 and LHY, thereby controlling photoperiodic flowering response. Involved in the positive and negative feedback loops of the circadian clock. With RVE8, forms a negative feedback loop of the circadian clock. Expression of several members of the ARR-like family is controlled by circadian rhythm. Proteolytic substrate of the E3 ubiquitin ligase SCF(ADO1) complex. APRR9, APRR7, and APRR5 coordinately act on the upstream region of the target genes to repress their expression from noon until midnight. The particular coordinated sequential expression of APRR9, APRR7, APRR5, APRR3 and APPR1 result to circadian waves that may be at the basis of the endogenous circadian clock. Negative regulator of shade avoidance response. Involved in the inhibition of leaf expansion in shade avoidance response. This Arabidopsis thaliana (Mouse-ear cress) protein is Two-component response regulator-like APRR5 (APRR5).